We begin with the raw amino-acid sequence, 282 residues long: HTH-type transcriptional activator RhaR (282 aa).

The 99-residue stretch at 179-277 (DKLITRLAAS…GMTPSQWRHL (99 aa)) folds into the HTH araC/xylS-type domain. DNA-binding regions (H-T-H motif) lie at residues 196 to 217 (DKFCDEASCSERVLRQQFRQQT) and 244 to 267 (ISDISTECGFEDSNYFSVVFTRET).

In terms of assembly, binds DNA as a dimer.

It is found in the cytoplasm. Functionally, activates expression of the rhaSR operon in response to L-rhamnose. The polypeptide is HTH-type transcriptional activator RhaR (Escherichia coli O1:K1 / APEC).